The chain runs to 513 residues: Plexin domain-containing protein 2 (513 aa).

A signal peptide spans 1-24; sequence MGARSESLVGVVLLFQLLADRLWC. Topologically, residues 25 to 438 are extracellular; the sequence is AATASDSLYD…AEMKTGTLHT (414 aa). N88, N145, N198, N206, N222, and N330 each carry an N-linked (GlcNAc...) asparagine glycan. Positions 312 to 357 constitute a PSI domain; sequence TCLQFNSCSSCVSSMIGFNCSWCNIPQRCSSGFDRHRQDWVENGCT. The chain crosses the membrane as a helical span at residues 439–459; the sequence is GLIIGILILVLLIITAILVAV. The Cytoplasmic segment spans residues 460 to 513; it reads YMYHHPTSSASLFLIERRPSRWPAMKFRRGSGHPAYAEVEPIGEKEGFIVSEQC.

The protein belongs to the plexin family.

It localises to the membrane. The chain is Plexin domain-containing protein 2 (plxdc2) from Xenopus laevis (African clawed frog).